The chain runs to 191 residues: Casparian strip membrane protein 4 (191 aa).

At 1-27 (MKTGSVEAGEQASEDATPRRGKKLNRG) the chain is on the cytoplasmic side. A helical membrane pass occupies residues 28–48 (ILILDLVLRVFGAICTLGSAV). The Extracellular portion of the chain corresponds to 49–72 (AMGTTSQTLPSSSQFFRFRAKYND). Residues 73 to 93 (LPMFMFFAIANSIVCAYLVLS) traverse the membrane as a helical segment. Residues 94–110 (LRLSIFHIIRSAGIITR) lie on the Cytoplasmic side of the membrane. The chain crosses the membrane as a helical span at residues 111-131 (IILVTFDMVMLVLLTCGASAA). The Extracellular portion of the chain corresponds to 132 to 160 (TSIVYLAHKGNASANWLPFCVRFSHFCNR). N-linked (GlcNAc...) asparagine glycosylation occurs at Asn-142. The chain crosses the membrane as a helical span at residues 161–181 (ISGSLIGSFFSIIIFMLLVIL). Residues 182–191 (SAVSQFSICN) lie on the Cytoplasmic side of the membrane.

This sequence belongs to the Casparian strip membrane proteins (CASP) family. In terms of assembly, homodimer and heterodimers.

It localises to the cell membrane. Regulates membrane-cell wall junctions and localized cell wall deposition. Required for establishment of the Casparian strip membrane domain (CSD) and the subsequent formation of Casparian strips, a cell wall modification of the root endodermis that determines an apoplastic barrier between the intraorganismal apoplasm and the extraorganismal apoplasm and prevents lateral diffusion. The protein is Casparian strip membrane protein 4 of Ricinus communis (Castor bean).